The following is a 444-amino-acid chain: Tol-Pal system protein TolB (444 aa).

The N-terminal stretch at 1 to 18 (MKNIIYCILLLFSFNSYA) is a signal peptide.

This sequence belongs to the TolB family. The Tol-Pal system is composed of five core proteins: the inner membrane proteins TolA, TolQ and TolR, the periplasmic protein TolB and the outer membrane protein Pal. They form a network linking the inner and outer membranes and the peptidoglycan layer.

The protein localises to the periplasm. Part of the Tol-Pal system, which plays a role in outer membrane invagination during cell division and is important for maintaining outer membrane integrity. The protein is Tol-Pal system protein TolB of Rickettsia bellii (strain OSU 85-389).